Reading from the N-terminus, the 221-residue chain is MSYGRPPPDVEGMTSLKVDNLTYRTSPDTLRRVFEKYGRVGDVYIPRDRYTKESRGFAFVRFHDKRDAEDAMDAMDGAVLDGRELRVQMARYGRPPDSHHSRRGPPPRRYGSSGYGRRSRSPRRRRRSRSRSRSRSRSRSRSRYSRSKSRSRTRSRSRSTSKSRSARRSKSKSSSVSRSRSRSRSRSRSRSPPPTSKRESNSRSRSKSPPKSPEEEGAVSS.

Residues 14–92 (TSLKVDNLTY…RELRVQMARY (79 aa)) form the RRM domain. A disordered region spans residues 91–221 (RYGRPPDSHH…SPEEEGAVSS (131 aa)). 2 stretches are compositionally biased toward basic residues: residues 117 to 171 (RRSR…RSKS) and 179 to 189 (SRSRSRSRSRS).

This sequence belongs to the splicing factor SR family. Post-translationally, extensively phosphorylated on serine residues in the RS domain.

It localises to the nucleus. Functionally, necessary for the splicing of pre-mRNA. It is required for formation of the earliest ATP-dependent splicing complex and interacts with spliceosomal components bound to both the 5'- and 3'-splice sites during spliceosome assembly. It also is required for ATP-dependent interactions of both U1 and U2 snRNPs with pre-mRNA. This chain is Serine/arginine-rich splicing factor 2 (SRSF2), found in Gallus gallus (Chicken).